Consider the following 807-residue polypeptide: Glycerol-3-phosphate acyltransferase (807 aa).

The short motif at 308–313 (CHRSHM) is the HXXXXD motif element.

It belongs to the GPAT/DAPAT family.

It is found in the cell inner membrane. It catalyses the reaction sn-glycerol 3-phosphate + an acyl-CoA = a 1-acyl-sn-glycero-3-phosphate + CoA. Its pathway is phospholipid metabolism; CDP-diacylglycerol biosynthesis; CDP-diacylglycerol from sn-glycerol 3-phosphate: step 1/3. This is Glycerol-3-phosphate acyltransferase from Shewanella pealeana (strain ATCC 700345 / ANG-SQ1).